A 106-amino-acid chain; its full sequence is MDHFLHIDVNAAQAMMEQKQAHLVDIRDPQSFQLAHAKNAYHLTNQSMVQFMEQAEFDQPVLVMCYHGISSQGAAQYLVNQGFEEVYSVDGGFEAWHRANLPIEAS.

Residues 17–105 form the Rhodanese domain; sequence EQKQAHLVDI…WHRANLPIEA (89 aa). Cys-65 (cysteine persulfide intermediate) is an active-site residue.

This sequence belongs to the GlpE family.

Its subcellular location is the cytoplasm. The enzyme catalyses thiosulfate + hydrogen cyanide = thiocyanate + sulfite + 2 H(+). The catalysed reaction is thiosulfate + [thioredoxin]-dithiol = [thioredoxin]-disulfide + hydrogen sulfide + sulfite + 2 H(+). Functionally, transferase that catalyzes the transfer of sulfur from thiosulfate to thiophilic acceptors such as cyanide or dithiols. May function in a CysM-independent thiosulfate assimilation pathway by catalyzing the conversion of thiosulfate to sulfite, which can then be used for L-cysteine biosynthesis. This chain is Thiosulfate sulfurtransferase GlpE, found in Vibrio cholerae serotype O1 (strain ATCC 39541 / Classical Ogawa 395 / O395).